Consider the following 419-residue polypeptide: tRNA(Met) cytidine acetate ligase (419 aa).

ATP-binding positions include 7–20 (ITEY…HLHH), glycine 101, asparagine 163, and arginine 188.

Belongs to the TmcAL family.

It is found in the cytoplasm. The enzyme catalyses cytidine(34) in elongator tRNA(Met) + acetate + ATP = N(4)-acetylcytidine(34) in elongator tRNA(Met) + AMP + diphosphate. In terms of biological role, catalyzes the formation of N(4)-acetylcytidine (ac(4)C) at the wobble position of elongator tRNA(Met), using acetate and ATP as substrates. First activates an acetate ion to form acetyladenylate (Ac-AMP) and then transfers the acetyl group to tRNA to form ac(4)C34. The chain is tRNA(Met) cytidine acetate ligase from Syntrophotalea carbinolica (strain DSM 2380 / NBRC 103641 / GraBd1) (Pelobacter carbinolicus).